The primary structure comprises 451 residues: Probable glycine dehydrogenase (decarboxylating) subunit 1 (451 aa).

Belongs to the GcvP family. N-terminal subunit subfamily. In terms of assembly, the glycine cleavage system is composed of four proteins: P, T, L and H. In this organism, the P 'protein' is a heterodimer of two subunits.

The catalysed reaction is N(6)-[(R)-lipoyl]-L-lysyl-[glycine-cleavage complex H protein] + glycine + H(+) = N(6)-[(R)-S(8)-aminomethyldihydrolipoyl]-L-lysyl-[glycine-cleavage complex H protein] + CO2. Its function is as follows. The glycine cleavage system catalyzes the degradation of glycine. The P protein binds the alpha-amino group of glycine through its pyridoxal phosphate cofactor; CO(2) is released and the remaining methylamine moiety is then transferred to the lipoamide cofactor of the H protein. This Thioalkalivibrio sulfidiphilus (strain HL-EbGR7) protein is Probable glycine dehydrogenase (decarboxylating) subunit 1.